Reading from the N-terminus, the 233-residue chain is Chalcone--flavanone isomerase (233 aa).

The substrate site is built by T47, N113, and S192.

It belongs to the chalcone isomerase family.

The enzyme catalyses a chalcone = a flavanone.. Its pathway is secondary metabolite biosynthesis; flavonoid biosynthesis. Its function is as follows. Catalyzes the intramolecular cyclization of bicyclic chalcones into tricyclic (S)-flavanones. Responsible for the isomerization of 4,2',4',6'-tetrahydroxychalcone (also termed chalcone) into naringenin. The protein is Chalcone--flavanone isomerase (CHI) of Oryza sativa subsp. japonica (Rice).